A 212-amino-acid chain; its full sequence is Ribosomal RNA small subunit methyltransferase G (212 aa).

Residues F78, 96 to 98 (ESS), 124 to 125 (VE), and R141 each bind S-adenosyl-L-methionine.

This sequence belongs to the methyltransferase superfamily. RNA methyltransferase RsmG family.

It is found in the cytoplasm. Functionally, specifically methylates the N7 position of a guanine in 16S rRNA. In Onion yellows phytoplasma (strain OY-M), this protein is Ribosomal RNA small subunit methyltransferase G.